The sequence spans 225 residues: Ribose-5-phosphate isomerase A (225 aa).

Substrate is bound by residues 32-35 (TGST), 85-88 (DGAD), and 98-101 (KGGG). Glu107 acts as the Proton acceptor in catalysis. Residue Lys125 participates in substrate binding.

It belongs to the ribose 5-phosphate isomerase family. As to quaternary structure, homodimer.

The catalysed reaction is aldehydo-D-ribose 5-phosphate = D-ribulose 5-phosphate. It functions in the pathway carbohydrate degradation; pentose phosphate pathway; D-ribose 5-phosphate from D-ribulose 5-phosphate (non-oxidative stage): step 1/1. In terms of biological role, catalyzes the reversible conversion of ribose-5-phosphate to ribulose 5-phosphate. The protein is Ribose-5-phosphate isomerase A of Hahella chejuensis (strain KCTC 2396).